Consider the following 562-residue polypeptide: Probable sesquiterpene synthase (562 aa).

Asp315, Asp319, and Glu467 together coordinate Mg(2+). The short motif at 315–319 (DDIYD) is the DDXXD motif element.

This sequence belongs to the terpene synthase family. Tpsa subfamily. Mg(2+) serves as cofactor. The cofactor is Mn(2+).

Its function is as follows. Sesquiterpene synthase. In Santalum spicatum (Australian sandalwood), this protein is Probable sesquiterpene synthase (SesquiTPS).